The following is a 548-amino-acid chain: Glucan 1,4-alpha-maltotetraohydrolase (548 aa).

The first 21 residues, 1–21, serve as a signal peptide directing secretion; it reads MSHILRAAVLAAMLLPLPSMA. Ca(2+)-binding residues include Asp22, Gln23, His34, Asp37, and Glu38. 99–100 contacts substrate; the sequence is YF. Residue Asn137 coordinates Ca(2+). Residue His138 coordinates substrate. A disulfide bridge connects residues Cys161 and Cys171. The Ca(2+) site is built by Asp172 and Asp175. Residue 177-181 coordinates substrate; sequence FIGGD. Position 183 (Asp183) interacts with Ca(2+). Position 212 (Arg212) interacts with substrate. The Nucleophile role is filled by Asp214. Residue 217 to 218 participates in substrate binding; that stretch reads RG. Ca(2+) is bound at residue Gly218. Cys237 and Cys272 are disulfide-bonded. Glu240 functions as the Proton donor in the catalytic mechanism. Substrate-binding residues include His314 and Gln326. Residues 446 to 548 form the CBM20 domain; that stretch reads GEPGALVSVS…SEGATTVGRL (103 aa). A compositionally biased stretch (polar residues) spans 529–542; that stretch reads QGGANNSLTPSEGA. A disordered region spans residues 529–548; the sequence is QGGANNSLTPSEGATTVGRL.

Belongs to the glycosyl hydrolase 13 family. As to quaternary structure, monomer. It depends on Ca(2+) as a cofactor.

Its subcellular location is the secreted. It carries out the reaction Hydrolysis of (1-&gt;4)-alpha-D-glucosidic linkages in amylaceous polysaccharides, to remove successive maltotetraose residues from the non-reducing chain ends.. The protein operates within glycan degradation; starch degradation. This chain is Glucan 1,4-alpha-maltotetraohydrolase (amyP), found in Stutzerimonas stutzeri (Pseudomonas stutzeri).